We begin with the raw amino-acid sequence, 668 residues long: DNA mismatch repair protein MutL (668 aa).

The protein belongs to the DNA mismatch repair MutL/HexB family.

Its function is as follows. This protein is involved in the repair of mismatches in DNA. It is required for dam-dependent methyl-directed DNA mismatch repair. May act as a 'molecular matchmaker', a protein that promotes the formation of a stable complex between two or more DNA-binding proteins in an ATP-dependent manner without itself being part of a final effector complex. The chain is DNA mismatch repair protein MutL from Limosilactobacillus reuteri (strain DSM 20016) (Lactobacillus reuteri).